The following is a 178-amino-acid chain: MGIEYRSLHTSQLTLSEKEALYDLLIEGFEGDFSHDDFAHTLGGMHVMAFDQQKLVGHVAIIQRHMALDNTPISVGYVEAMVVEQSYRRQGIGRQLMLQTNKIIASCYQLGLLSASDDGQKLYHSVGWQIWKGKLFELKQGSYIRSIEEEGGVMGWKADGEVDFTASLYCDFRGGDQW.

An N-acetyltransferase domain is found at 8–171 (LHTSQLTLSE…VDFTASLYCD (164 aa)). Substrate-binding positions include Asp32 and 79–80 (EA). CoA is bound by residues 81–83 (MVV) and 88–93 (RRQGIG). Substrate is bound by residues Ser114 and 148-149 (EE).

Belongs to the AAC(2')-I acetyltransferase family. As to quaternary structure, homodimer.

The enzyme catalyses gentamicin C1a + acetyl-CoA = N(2')-acetylgentamicin C1a + CoA + H(+). Its function is as follows. Catalyzes the coenzyme A-dependent acetylation of the 2' hydroxyl or amino group of a broad spectrum of aminoglycosides. It confers resistance to aminoglycosides. The chain is Aminoglycoside 2'-N-acetyltransferase (aac) from Providencia stuartii.